The chain runs to 72 residues: Bradykinin-potentiating peptide BmKbpp (72 aa).

The first 22 residues, 1 to 22, serve as a signal peptide directing secretion; that stretch reads MNKKTLLVIFFVTMLIVDEVNS. A propeptide spanning residues 70 to 72 is cleaved from the precursor; that stretch reads RRR.

The protein belongs to the non-disulfide-bridged peptide (NDBP) superfamily. Long chain multifunctional peptide (group 2) family. In terms of tissue distribution, expressed by the venom gland.

It localises to the secreted. In terms of biological role, amphipathic peptide that shows bradykinin potentiating activity and antimicrobial activities against bacteria and fungi. Has higher antibacterial activities against Gram-negative than against Gram-positive bacteria. Also inhibits NADPH oxidase-dependent superoxide production (IC(50) is 0.4 uM on granulocytes stimulated with PMA, IC(50) is 0.51 uM on HL-60 cells undifferentiated and IC(50) is 0.53 uM on HL-60 cells treated with DMSO). The C-terminal peptide shows a higher bradykinin potentiating activity than the complete peptide. The polypeptide is Bradykinin-potentiating peptide BmKbpp (Olivierus martensii (Manchurian scorpion)).